The sequence spans 77 residues: Probable Vpr-like protein (77 aa).

The Nuclear export signal motif lies at L34–L42. Positions R44–K53 match the Nuclear localization signal motif.

The protein localises to the virion. It is found in the host nucleus. Seems to function as a Vpr-like protein, since it mediates host cell cycle arrest in G2 phase. Cell cycle arrest creates a favorable environment for maximizing viral expression and production. This chain is Probable Vpr-like protein, found in Felidae (cat family).